A 90-amino-acid chain; its full sequence is Evasin P1126 (90 aa).

The N-terminal stretch at 1–25 (MTSHSAVRIAIFAVIALHSIFECLS) is a signal peptide. Disulfide bonds link Cys46/Cys62, Cys50/Cys64, and Cys58/Cys75. A glycan (N-linked (GlcNAc...) asparagine) is linked at Asn55. The N-linked (GlcNAc...) asparagine glycan is linked to Asn77.

Its subcellular location is the secreted. In terms of biological role, salivary chemokine-binding protein which binds to host chemokines CXCL1, CXCL2, CXCL3, CXCL4, CXCL5, CXCL6, CXCL7, CXCL10 and CXCL11. In Amblyomma cajennense (Cayenne tick), this protein is Evasin P1126.